We begin with the raw amino-acid sequence, 175 residues long: uncharacterized protein (175 aa).

This is an uncharacterized protein from Escherichia coli.